Here is a 108-residue protein sequence, read N- to C-terminus: Pyrimidine/purine nucleoside phosphorylase (108 aa).

It belongs to the nucleoside phosphorylase PpnP family.

It catalyses the reaction a purine D-ribonucleoside + phosphate = a purine nucleobase + alpha-D-ribose 1-phosphate. It carries out the reaction adenosine + phosphate = alpha-D-ribose 1-phosphate + adenine. The catalysed reaction is cytidine + phosphate = cytosine + alpha-D-ribose 1-phosphate. The enzyme catalyses guanosine + phosphate = alpha-D-ribose 1-phosphate + guanine. It catalyses the reaction inosine + phosphate = alpha-D-ribose 1-phosphate + hypoxanthine. It carries out the reaction thymidine + phosphate = 2-deoxy-alpha-D-ribose 1-phosphate + thymine. The catalysed reaction is uridine + phosphate = alpha-D-ribose 1-phosphate + uracil. The enzyme catalyses xanthosine + phosphate = alpha-D-ribose 1-phosphate + xanthine. Functionally, catalyzes the phosphorolysis of diverse nucleosides, yielding D-ribose 1-phosphate and the respective free bases. Can use uridine, adenosine, guanosine, cytidine, thymidine, inosine and xanthosine as substrates. Also catalyzes the reverse reactions. In Polaromonas naphthalenivorans (strain CJ2), this protein is Pyrimidine/purine nucleoside phosphorylase.